We begin with the raw amino-acid sequence, 114 residues long: MVNEMRDNTVPHMTREDMEKRANEVANLLKTLSHPVRLMLVCTLVEGEFSVGELEQQIGIGQPTLSQQLGVLRESGIVETRRNIKQIFYRLTEAKAAQLVNALYTIFCTQEKQA.

In terms of domain architecture, HTH arsR-type spans 17-111 (DMEKRANEVA…ALYTIFCTQE (95 aa)). The segment at residues 51 to 74 (VGELEQQIGIGQPTLSQQLGVLRE) is a DNA-binding region (H-T-H motif).

Its function is as follows. Represses an operon that probably comprises itself, PD_1892, PD_1893, PD_1894 and blh. Binds to a palindromic AT-rich sequence spanning the -10 region of the blh promoter and blocks transcription of the operon. The protein is Biofilm growth-associated repressor (bigR) of Xylella fastidiosa (strain Temecula1 / ATCC 700964).